The primary structure comprises 31 residues: Photosystem II reaction center protein T (31 aa).

A helical transmembrane segment spans residues 3–23; the sequence is AIVYTFLLVGTLGIIFFAIFF.

The protein belongs to the PsbT family. PSII is composed of 1 copy each of membrane proteins PsbA, PsbB, PsbC, PsbD, PsbE, PsbF, PsbH, PsbI, PsbJ, PsbK, PsbL, PsbM, PsbT, PsbY, PsbZ, Psb30/Ycf12, at least 3 peripheral proteins of the oxygen-evolving complex and a large number of cofactors. It forms dimeric complexes.

Its subcellular location is the plastid. The protein localises to the chloroplast thylakoid membrane. Found at the monomer-monomer interface of the photosystem II (PS II) dimer, plays a role in assembly and dimerization of PSII. PSII is a light-driven water plastoquinone oxidoreductase, using light energy to abstract electrons from H(2)O, generating a proton gradient subsequently used for ATP formation. This is Photosystem II reaction center protein T from Ostreococcus tauri.